Reading from the N-terminus, the 78-residue chain is UPF0369 protein RP167 (78 aa).

Belongs to the SDHAF4 family.

In Rickettsia prowazekii (strain Madrid E), this protein is UPF0369 protein RP167.